A 62-amino-acid chain; its full sequence is Large ribosomal subunit protein uL29 (62 aa).

Belongs to the universal ribosomal protein uL29 family.

This Trichlorobacter lovleyi (strain ATCC BAA-1151 / DSM 17278 / SZ) (Geobacter lovleyi) protein is Large ribosomal subunit protein uL29.